Consider the following 1288-residue polypeptide: Structural maintenance of chromosomes protein 4 (1288 aa).

A compositionally biased stretch (polar residues) spans methionine 1–threonine 10. The interval methionine 1–asparagine 55 is disordered. 2 positions are modified to phosphoserine: serine 22 and serine 28. Threonine 39 is modified (phosphothreonine). Over residues threonine 39–threonine 48 the composition is skewed to low complexity. Phosphoserine occurs at positions 41 and 50. Glycine 113–serine 120 lines the ATP pocket. At serine 143 the chain carries Phosphoserine. The stretch at arginine 272–serine 588 forms a coiled coil. Residues lysine 381 and lysine 679 each carry the N6-acetyllysine modification. The 115-residue stretch at proline 613–valine 727 folds into the SMC hinge domain. The stretch at leucine 767–glutamine 1020 forms a coiled coil. 2 positions are modified to phosphoserine: serine 982 and serine 1056. The stretch at glutamate 1109–lysine 1129 forms a coiled coil.

The protein belongs to the SMC family. SMC4 subfamily. As to quaternary structure, forms a heterodimer with SMC2. Component of the condensin complex, which contains the SMC2 and SMC4 heterodimer, and three non SMC subunits that probably regulate the complex: BRRN1/CAPH, CNAP1/CAPD2 and CAPG. Widely expressed. Higher expression in testis, colon, thymus.

It is found in the nucleus. Its subcellular location is the cytoplasm. It localises to the chromosome. Its function is as follows. Central component of the condensin complex, a complex required for conversion of interphase chromatin into mitotic-like condense chromosomes. The condensin complex probably introduces positive supercoils into relaxed DNA in the presence of type I topoisomerases and converts nicked DNA into positive knotted forms in the presence of type II topoisomerases. This is Structural maintenance of chromosomes protein 4 (SMC4) from Homo sapiens (Human).